The sequence spans 213 residues: Phosphatidylserine decarboxylase proenzyme (213 aa).

The Schiff-base intermediate with substrate; via pyruvic acid role is filled by serine 183. Position 183 is a pyruvic acid (Ser); by autocatalysis (serine 183).

Belongs to the phosphatidylserine decarboxylase family. PSD-A subfamily. In terms of assembly, heterodimer of a large membrane-associated beta subunit and a small pyruvoyl-containing alpha subunit. Pyruvate serves as cofactor. In terms of processing, is synthesized initially as an inactive proenzyme. Formation of the active enzyme involves a self-maturation process in which the active site pyruvoyl group is generated from an internal serine residue via an autocatalytic post-translational modification. Two non-identical subunits are generated from the proenzyme in this reaction, and the pyruvate is formed at the N-terminus of the alpha chain, which is derived from the carboxyl end of the proenzyme. The post-translation cleavage follows an unusual pathway, termed non-hydrolytic serinolysis, in which the side chain hydroxyl group of the serine supplies its oxygen atom to form the C-terminus of the beta chain, while the remainder of the serine residue undergoes an oxidative deamination to produce ammonia and the pyruvoyl prosthetic group on the alpha chain.

It is found in the cell membrane. The catalysed reaction is a 1,2-diacyl-sn-glycero-3-phospho-L-serine + H(+) = a 1,2-diacyl-sn-glycero-3-phosphoethanolamine + CO2. It functions in the pathway phospholipid metabolism; phosphatidylethanolamine biosynthesis; phosphatidylethanolamine from CDP-diacylglycerol: step 2/2. Functionally, catalyzes the formation of phosphatidylethanolamine (PtdEtn) from phosphatidylserine (PtdSer). This Syntrophus aciditrophicus (strain SB) protein is Phosphatidylserine decarboxylase proenzyme.